The following is a 271-amino-acid chain: GPN-loop GTPase 3 (271 aa).

A GTP-binding site is contributed by 13–18 (GVGKST). Residues 70–72 (GPN) carry the Gly-Pro-Asn (GPN)-loop; involved in dimer interface motif. 173–176 (SKMD) contributes to the GTP binding site.

It belongs to the GPN-loop GTPase family. Heterodimers with GPN1 or GPN2. Binds to RNA polymerase II (RNAPII).

Its function is as follows. Small GTPase required for proper nuclear import of RNA polymerase II and III (RNAPII and RNAPIII). May act at an RNAP assembly step prior to nuclear import. In Yarrowia lipolytica (strain CLIB 122 / E 150) (Yeast), this protein is GPN-loop GTPase 3.